We begin with the raw amino-acid sequence, 611 residues long: Acetylcholinesterase (611 aa).

The first 31 residues, 1 to 31 (MRPPWCPLYTPSLAAPILLLLLFLLGGGAEA), serve as a signal peptide directing secretion. Cys-97 and Cys-124 form a disulfide bridge. Catalysis depends on Ser-231, which acts as the Acyl-ester intermediate. A disulfide bridge connects residues Cys-285 and Cys-300. N-linked (GlcNAc...) asparagine glycosylation occurs at Asn-293. Catalysis depends on Glu-362, which acts as the Charge relay system. An N-linked (GlcNAc...) asparagine glycan is attached at Asn-378. A disulfide bridge links Cys-437 with Cys-557. His-475 functions as the Charge relay system in the catalytic mechanism. N-linked (GlcNAc...) asparagine glycosylation is present at Asn-492.

Belongs to the type-B carboxylesterase/lipase family. In terms of assembly, interacts with PRIMA1. The interaction with PRIMA1 is required to anchor it to the basal lamina of cells and organize into tetramers. Isoform H generates GPI-anchored dimers; disulfide linked. Isoform T generates multiple structures, ranging from monomers and dimers to collagen-tailed and hydrophobic-tailed forms, in which catalytic tetramers are associated with anchoring proteins that attach them to the basal lamina or to cell membranes. In the collagen-tailed forms, isoform T subunits are associated with a specific collagen, COLQ, which triggers the formation of isoform T tetramers, from monomers and dimers.

It is found in the synapse. The protein localises to the secreted. It localises to the cell membrane. The enzyme catalyses acetylcholine + H2O = choline + acetate + H(+). Terminates signal transduction at the neuromuscular junction by rapid hydrolysis of the acetylcholine released into the synaptic cleft. The sequence is that of Acetylcholinesterase (ACHE) from Felis catus (Cat).